The following is a 107-amino-acid chain: UPF0145 protein BVU_2335 (107 aa).

Belongs to the UPF0145 family.

The polypeptide is UPF0145 protein BVU_2335 (Phocaeicola vulgatus (strain ATCC 8482 / DSM 1447 / JCM 5826 / CCUG 4940 / NBRC 14291 / NCTC 11154) (Bacteroides vulgatus)).